A 95-amino-acid polypeptide reads, in one-letter code: Protein NCBP2AS2 homolog (95 aa).

This is Protein NCBP2AS2 homolog from Ixodes scapularis (Black-legged tick).